The following is a 216-amino-acid chain: Large ribosomal subunit protein uL4 (216 aa).

Residues 47–77 (THKVKGMGEVSGTTKKPYRQKGTGNARQGSL) are disordered.

The protein belongs to the universal ribosomal protein uL4 family. As to quaternary structure, part of the 50S ribosomal subunit.

Functionally, one of the primary rRNA binding proteins, this protein initially binds near the 5'-end of the 23S rRNA. It is important during the early stages of 50S assembly. It makes multiple contacts with different domains of the 23S rRNA in the assembled 50S subunit and ribosome. Its function is as follows. Forms part of the polypeptide exit tunnel. The chain is Large ribosomal subunit protein uL4 from Acidiphilium cryptum (strain JF-5).